The primary structure comprises 174 residues: Glyoxylase I 4 (174 aa).

A VOC domain is found at 13–135 (SLNHVSVLCR…DGFMIEICNC (123 aa)). Residue glutamate 131 is the Proton donor/acceptor of the active site.

It belongs to the glyoxalase I family. In terms of tissue distribution, mostly expressed in roots, and, to a lower extent, in leaves, flowers, seeds and siliques.

Its subcellular location is the cell membrane. The protein resides in the cytoplasm. Functionally, involved in the detoxification and scavenging of methylglyoxal (MG), a cytotoxic aldehyde produced in response to primary metabolism alteration observed during biotic and abiotic stresses. Modulates cross-talk between salicylic acid (SA) and jasmonic acid (JA) signaling pathways during defense responses to pathogens such as Botrytis cinerea. This is Glyoxylase I 4 from Arabidopsis thaliana (Mouse-ear cress).